The primary structure comprises 122 residues: UPF0102 protein Krad_1407 (122 aa).

Belongs to the UPF0102 family.

This chain is UPF0102 protein Krad_1407, found in Kineococcus radiotolerans (strain ATCC BAA-149 / DSM 14245 / SRS30216).